Here is a 480-residue protein sequence, read N- to C-terminus: Adenylosuccinate synthetase, chloroplastic (480 aa).

The transit peptide at methionine 1–tyrosine 54 directs the protein to the chloroplast. Residues glycine 69 to lysine 75 and glycine 97 to threonine 99 contribute to the GTP site. Aspartate 70 (proton acceptor) is an active-site residue. 2 residues coordinate Mg(2+): aspartate 70 and glycine 97. Residues aspartate 70 to lysine 73, asparagine 95 to histidine 98, threonine 187, arginine 201, asparagine 278, threonine 293, and arginine 357 each bind IMP. Residue histidine 98 is the Proton donor of the active site. Threonine 353–arginine 359 contacts substrate. Residues arginine 359, lysine 385–aspartate 387, and glycine 468–glycine 470 contribute to the GTP site.

The protein belongs to the adenylosuccinate synthetase family. As to quaternary structure, homodimer. The cofactor is Mg(2+).

Its subcellular location is the plastid. It localises to the chloroplast. It carries out the reaction IMP + L-aspartate + GTP = N(6)-(1,2-dicarboxyethyl)-AMP + GDP + phosphate + 2 H(+). It functions in the pathway purine metabolism; AMP biosynthesis via de novo pathway; AMP from IMP: step 1/2. Plays an important role in the de novo pathway and in the salvage pathway of purine nucleotide biosynthesis. Catalyzes the first committed step in the biosynthesis of AMP from IMP. This is Adenylosuccinate synthetase, chloroplastic from Ostreococcus tauri.